A 1044-amino-acid polypeptide reads, in one-letter code: R3H domain-containing protein 2 (1044 aa).

Disordered regions lie at residues 23 to 71 (EESV…AKSN) and 106 to 147 (SCPS…QEYT). Residues 36–56 (PSKEDVEKEGEENGLRQETQR) show a composition bias toward basic and acidic residues. Position 37 is a phosphoserine (Ser-37). The segment covering 58–71 (TSSHGHARKRAKSN) has biased composition (basic residues). Over residues 109-143 (SDKEEEKSTKDVSEKEDKDKSKEKVPRKMLSRDSS) the composition is skewed to basic and acidic residues. A Phosphoserine modification is found at Ser-143. The region spanning 169–232 (RMMLLKLEQE…AVIINKTSST (64 aa)) is the R3H domain. The SUZ domain occupies 233–303 (RIPEQRFSEH…VRERIFARET (71 aa)). 2 stretches are compositionally biased toward basic and acidic residues: residues 261–270 (DASMDRDDNQ) and 277–288 (DGRRSKSIEERE). Disordered regions lie at residues 261-288 (DASM…EERE), 320-408 (SSSS…LSRP), 433-485 (CTAQ…FSPS), 502-533 (MAED…LFQP), 551-600 (GQPL…SNQQ), 729-770 (GTSP…SPSG), and 807-848 (GQKP…SLSN). Low complexity predominate over residues 338-349 (SRTSSSRQSSTD). 3 positions are modified to phosphoserine: Ser-362, Ser-365, and Ser-381. Low complexity predominate over residues 433–449 (CTAQQQQQQQQQQQQLP). Composition is skewed to polar residues over residues 509-521 (PFGQ…QGST) and 554-572 (LPTS…QQVL). Low complexity predominate over residues 757–770 (PQMSQQYSGVSPSG). The segment covering 818 to 848 (GSPQANAQMGSSPVTSPTQSPAPSPVTSLSN) has biased composition (polar residues). 2 positions are modified to phosphoserine: Ser-921 and Ser-923. Residues Thr-924 and Thr-928 each carry the phosphothreonine modification.

It localises to the nucleus. This is R3H domain-containing protein 2 (R3hdm2) from Mus musculus (Mouse).